The primary structure comprises 256 residues: tRNA-cytidine(32) 2-sulfurtransferase (256 aa).

The PP-loop motif signature appears at 35–40 (SGGKDS). Residues Cys110, Cys113, and Cys201 each contribute to the [4Fe-4S] cluster site.

Belongs to the TtcA family. As to quaternary structure, homodimer. Mg(2+) is required as a cofactor. [4Fe-4S] cluster serves as cofactor.

It is found in the cytoplasm. It carries out the reaction cytidine(32) in tRNA + S-sulfanyl-L-cysteinyl-[cysteine desulfurase] + AH2 + ATP = 2-thiocytidine(32) in tRNA + L-cysteinyl-[cysteine desulfurase] + A + AMP + diphosphate + H(+). It functions in the pathway tRNA modification. In terms of biological role, catalyzes the ATP-dependent 2-thiolation of cytidine in position 32 of tRNA, to form 2-thiocytidine (s(2)C32). The sulfur atoms are provided by the cysteine/cysteine desulfurase (IscS) system. The protein is tRNA-cytidine(32) 2-sulfurtransferase of Coxiella burnetii (strain CbuG_Q212) (Coxiella burnetii (strain Q212)).